Reading from the N-terminus, the 123-residue chain is Small ribosomal subunit protein uS13 (123 aa).

It belongs to the universal ribosomal protein uS13 family. As to quaternary structure, part of the 30S ribosomal subunit. Forms a loose heterodimer with protein S19. Forms two bridges to the 50S subunit in the 70S ribosome.

Functionally, located at the top of the head of the 30S subunit, it contacts several helices of the 16S rRNA. In the 70S ribosome it contacts the 23S rRNA (bridge B1a) and protein L5 of the 50S subunit (bridge B1b), connecting the 2 subunits; these bridges are implicated in subunit movement. Contacts the tRNAs in the A and P-sites. The protein is Small ribosomal subunit protein uS13 of Anaplasma marginale (strain St. Maries).